The chain runs to 351 residues: Biotin synthase (351 aa).

One can recognise a Radical SAM core domain in the interval 49-265 (NRVRIHILDN…LSVFRLVNPD (217 aa)). [4Fe-4S] cluster is bound by residues Cys-64, Cys-68, and Cys-71. Residues Cys-108, Cys-140, Cys-200, and Arg-269 each coordinate [2Fe-2S] cluster.

Belongs to the radical SAM superfamily. Biotin synthase family. In terms of assembly, homodimer. [4Fe-4S] cluster serves as cofactor. It depends on [2Fe-2S] cluster as a cofactor.

It carries out the reaction (4R,5S)-dethiobiotin + (sulfur carrier)-SH + 2 reduced [2Fe-2S]-[ferredoxin] + 2 S-adenosyl-L-methionine = (sulfur carrier)-H + biotin + 2 5'-deoxyadenosine + 2 L-methionine + 2 oxidized [2Fe-2S]-[ferredoxin]. The protein operates within cofactor biosynthesis; biotin biosynthesis; biotin from 7,8-diaminononanoate: step 2/2. Its function is as follows. Catalyzes the conversion of dethiobiotin (DTB) to biotin by the insertion of a sulfur atom into dethiobiotin via a radical-based mechanism. This Leptospira biflexa serovar Patoc (strain Patoc 1 / Ames) protein is Biotin synthase.